The chain runs to 488 residues: Phenylalanine--tRNA ligase alpha subunit (488 aa).

L-phenylalanine contacts are provided by residues threonine 315, 354-356 (QLD), phenylalanine 394, and phenylalanine 419.

The protein belongs to the class-II aminoacyl-tRNA synthetase family. Phe-tRNA synthetase alpha subunit type 2 subfamily. As to quaternary structure, tetramer of two alpha and two beta subunits. Mg(2+) is required as a cofactor.

It localises to the cytoplasm. The enzyme catalyses tRNA(Phe) + L-phenylalanine + ATP = L-phenylalanyl-tRNA(Phe) + AMP + diphosphate + H(+). This Pyrobaculum arsenaticum (strain DSM 13514 / JCM 11321 / PZ6) protein is Phenylalanine--tRNA ligase alpha subunit.